We begin with the raw amino-acid sequence, 154 residues long: Low molecular weight protein-tyrosine-phosphatase PtpA (154 aa).

Cys-8 serves as the catalytic Nucleophile. Arg-14 is a catalytic residue. Asp-120 (proton donor) is an active-site residue.

This sequence belongs to the low molecular weight phosphotyrosine protein phosphatase family.

The enzyme catalyses O-phospho-L-tyrosyl-[protein] + H2O = L-tyrosyl-[protein] + phosphate. In terms of biological role, dephosphorylates the phosphotyrosine-containing proteins. The sequence is that of Low molecular weight protein-tyrosine-phosphatase PtpA (ptpA) from Staphylococcus haemolyticus (strain JCSC1435).